The sequence spans 281 residues: Probable feruloyl esterase A (281 aa).

The first 21 residues, 1–21, serve as a signal peptide directing secretion; sequence MKNFFSMHAILLACSAGAGLA. 3 cysteine pairs are disulfide-bonded: Cys50-Cys279, Cys112-Cys115, and Cys248-Cys255. Residue Asp98 participates in substrate binding. Residue Asn100 is glycosylated (N-linked (GlcNAc...) asparagine). Tyr101 provides a ligand contact to substrate. The Nucleophile role is filled by Ser154. N-linked (GlcNAc...) asparagine glycosylation is present at Asn173. Asp215 acts as the Charge relay system in catalysis. Substrate is bound at residue His268. The active-site Charge relay system is His268.

This sequence belongs to the AB hydrolase superfamily. FaeA family.

The protein resides in the secreted. It catalyses the reaction feruloyl-polysaccharide + H2O = ferulate + polysaccharide.. Its function is as follows. Involved in degradation of plant cell walls. Hydrolyzes the feruloyl-arabinose ester bond in arabinoxylans, and the feruloyl-galactose ester bond in pectin. The polypeptide is Probable feruloyl esterase A (faeA) (Aspergillus oryzae (strain ATCC 42149 / RIB 40) (Yellow koji mold)).